Reading from the N-terminus, the 146-residue chain is Decarboxylase dmxR15 (146 aa).

Positions 31 to 126 (PGMSEGDYRN…MHDHEVFADT (96 aa)) constitute an EthD domain.

The protein belongs to the tpcK family.

The enzyme catalyses atrochrysone carboxylate + H(+) = atrochrysone + CO2. It participates in secondary metabolite biosynthesis. Decarboxylase; part of the gene cluster that mediates the biosynthesis of the dimeric xanthones cryptosporioptides. The pathway begins with the synthesis of atrochrysone thioester by the polyketide synthase dmx-nrPKS. The atrochrysone carboxyl ACP thioesterase dmxR1 then breaks the thioester bond and releases the atrochrysone carboxylic acid from dmx-nrPKS. Atrochrysone carboxylic acid is decarboxylated by the decarboxylase dmxR15, and oxidized by the anthrone oxygenase dmxR16 to yield emodin. Emodin is then reduced to emodin hydroquinone by the oxidoreductase dmxR7. A-ring reduction by the short chain dehydrogenase dmxR18, dehydration by the scytalone dehydratase-like protein dmxR17 and probable spontaneous re-oxidation, results in overall deoxygenation to chrysophanol. Baeyer-Villiger oxidation by the Baeyer-Villiger monooxygenase (BVMO) dmxR6 then yields monodictylactone in equilibrium with monodictyphenone. In the case of the cryptosporioptides biosynthesis, monodictylactone is reduced at C-12 to an alcohol (by the short chain dehydrogenases dmxR12 or dmxR8) and hydroxylated at C-5 by dmxR9, yielding the electron-rich aromatic which could eliminate H(2)O to form the ortho-quinonemethide, followed by tautomerisation to paraquinone and complete the formal reduction to produce the 10-methylgroup. Conjugate addition of C-4a-OH to the resulting paraquinone by the monooxygenase dmxR10 then gives cyclohexadienone, which is then reduced at C-5 by the short chain dehydrogenase dmxR3 to give the dihydroxanthone. The 6,7-epoxide in the cryptosporioptides could be introduced by the cytochrome P450 monooxygenase dmxL3. The highly reducing PKS dmxL2 manufactures butyrate, which is further carboxylated by dmxL1 to form ethylmalonate. It is not yet clear whether the carboxylation occurs while the butyrate is attached to the ACP of dmxL2, but this unusual fungal metabolite could then be esterified to O-5 by the O-acetyltransferase dmxR13. Finally, dimerization performed by dmxR5 gives the observed dimers cryptosporioptides A, B and C as the final products of the pathway. This Cryptosporiopsis sp. (strain 8999) protein is Decarboxylase dmxR15.